The sequence spans 199 residues: DnaJ homolog subfamily C member 5B (199 aa).

Residues S14 and S16 each carry the phosphoserine modification. In terms of domain architecture, J spans 19–84; the sequence is ALYEILGLQK…SKRNIYDKYG (66 aa).

In terms of assembly, interacts with the chaperone complex consisting of HSC70 and SGTA. Post-translationally, palmitoylated.

The protein localises to the membrane. The protein is DnaJ homolog subfamily C member 5B (DNAJC5B) of Ailuropoda melanoleuca (Giant panda).